The sequence spans 163 residues: Small ribosomal subunit protein uS9 (163 aa).

The segment at 1–41 (MAENTNDSAVLETEEELTSYTTETNAGAGTGTSTIAPGYGT) is disordered. The segment covering 18-38 (TSYTTETNAGAGTGTSTIAPG) has biased composition (low complexity).

It belongs to the universal ribosomal protein uS9 family.

This Bifidobacterium adolescentis (strain ATCC 15703 / DSM 20083 / NCTC 11814 / E194a) protein is Small ribosomal subunit protein uS9.